Reading from the N-terminus, the 86-residue chain is Large ribosomal subunit protein bL27 (86 aa).

Residues 1–24 (MAHKKAGGSTRNGRDSESKRLGVK) are disordered.

The protein belongs to the bacterial ribosomal protein bL27 family.

The polypeptide is Large ribosomal subunit protein bL27 (Alcanivorax borkumensis (strain ATCC 700651 / DSM 11573 / NCIMB 13689 / SK2)).